A 161-amino-acid chain; its full sequence is uncharacterized protein (161 aa).

Over residues 1 to 10 (MSKQQEQDTP) the composition is skewed to polar residues. Disordered stretches follow at residues 1–20 (MSKQQEQDTPSFGEIRQRLQ), 55–84 (KKTREEQIAEDEHAASLRRLGHAERSMSDE), and 118–161 (LLQQ…ANNS). A coiled-coil region spans residues 82-107 (SDEEYARQLQEEMDRLDASIQMDKEA). The span at 144–161 (QQSSNTTTSSSCQSANNS) shows a compositional bias: low complexity.

This is an uncharacterized protein from Caenorhabditis elegans.